The following is a 173-amino-acid chain: Alkyl hydroperoxide reductase AhpD (173 aa).

Cysteine 131 acts as the Proton donor in catalysis. Cysteine 131 and cysteine 134 are joined by a disulfide. Cysteine 134 functions as the Cysteine sulfenic acid (-SOH) intermediate in the catalytic mechanism.

This sequence belongs to the AhpD family.

The enzyme catalyses N(6)-[(R)-dihydrolipoyl]-L-lysyl-[lipoyl-carrier protein] + a hydroperoxide = N(6)-[(R)-lipoyl]-L-lysyl-[lipoyl-carrier protein] + an alcohol + H2O. In terms of biological role, antioxidant protein with alkyl hydroperoxidase activity. Required for the reduction of the AhpC active site cysteine residues and for the regeneration of the AhpC enzyme activity. The chain is Alkyl hydroperoxide reductase AhpD from Maricaulis maris (strain MCS10) (Caulobacter maris).